Consider the following 273-residue polypeptide: Ribosomal RNA small subunit methyltransferase A (273 aa).

6 residues coordinate S-adenosyl-L-methionine: Asn-18, Leu-20, Gly-45, Glu-66, Asp-91, and Asn-113.

This sequence belongs to the class I-like SAM-binding methyltransferase superfamily. rRNA adenine N(6)-methyltransferase family. RsmA subfamily.

Its subcellular location is the cytoplasm. It catalyses the reaction adenosine(1518)/adenosine(1519) in 16S rRNA + 4 S-adenosyl-L-methionine = N(6)-dimethyladenosine(1518)/N(6)-dimethyladenosine(1519) in 16S rRNA + 4 S-adenosyl-L-homocysteine + 4 H(+). In terms of biological role, specifically dimethylates two adjacent adenosines (A1518 and A1519) in the loop of a conserved hairpin near the 3'-end of 16S rRNA in the 30S particle. May play a critical role in biogenesis of 30S subunits. The chain is Ribosomal RNA small subunit methyltransferase A from Escherichia fergusonii (strain ATCC 35469 / DSM 13698 / CCUG 18766 / IAM 14443 / JCM 21226 / LMG 7866 / NBRC 102419 / NCTC 12128 / CDC 0568-73).